The sequence spans 215 residues: Cytochrome b6 (215 aa).

Residues 32-52 traverse the membrane as a helical segment; the sequence is IFYCIGGITFTCFIMQVASGF. C35 is a binding site for heme c. Positions 86 and 100 each coordinate heme b. 3 consecutive transmembrane segments (helical) span residues 90-110, 116-136, and 186-206; these read ASMMVLTMILHVFRVYLTGGF, LTWVTGVILAVCTVSFGVTGY, and LHTFVLPLLTAVFMLAHFLMI. Heme b is bound by residues H187 and H202.

Belongs to the cytochrome b family. PetB subfamily. In terms of assembly, the 4 large subunits of the cytochrome b6-f complex are cytochrome b6, subunit IV (17 kDa polypeptide, PetD), cytochrome f and the Rieske protein, while the 4 small subunits are PetG, PetL, PetM and PetN. The complex functions as a dimer. The cofactor is heme b. Requires heme c as cofactor.

The protein localises to the plastid. It localises to the chloroplast thylakoid membrane. Its function is as follows. Component of the cytochrome b6-f complex, which mediates electron transfer between photosystem II (PSII) and photosystem I (PSI), cyclic electron flow around PSI, and state transitions. The sequence is that of Cytochrome b6 from Mesostigma viride (Green alga).